The sequence spans 399 residues: Salivary protein Tsal1 (399 aa).

A signal peptide spans 1–22; sequence MALKLVYGVFTLALLGISSVNA. Residue Asn-268 is glycosylated (N-linked (GlcNAc...) asparagine).

Belongs to the DNA/RNA non-specific endonuclease family. Requires a divalent metal cation as cofactor. Saliva (at protein level).

It localises to the secreted. In terms of biological role, binds double-stranded DNA (dsDNA) with high affinity. Binds double-stranded RNA. Binds single-stranded DNA with lower affinity and with a preference for purine-rich sequences. Shows residual nuclease activity for dsDNA. May facilitate blood meal intake by lowering the local viscosity created by the release of host DNA. The protein is Salivary protein Tsal1 of Glossina morsitans morsitans (Savannah tsetse fly).